A 371-amino-acid polypeptide reads, in one-letter code: Flagellar P-ring protein (371 aa).

The first 25 residues, 1-25 (MTMRVCKWLLTFALLFAATLTPAHS), serve as a signal peptide directing secretion.

This sequence belongs to the FlgI family. In terms of assembly, the basal body constitutes a major portion of the flagellar organelle and consists of four rings (L,P,S, and M) mounted on a central rod.

Its subcellular location is the periplasm. The protein localises to the bacterial flagellum basal body. Its function is as follows. Assembles around the rod to form the L-ring and probably protects the motor/basal body from shearing forces during rotation. The chain is Flagellar P-ring protein from Sinorhizobium fredii (strain NBRC 101917 / NGR234).